Here is a 107-residue protein sequence, read N- to C-terminus: Large ribosomal subunit protein uL24 (107 aa).

This sequence belongs to the universal ribosomal protein uL24 family. As to quaternary structure, part of the 50S ribosomal subunit.

Functionally, one of two assembly initiator proteins, it binds directly to the 5'-end of the 23S rRNA, where it nucleates assembly of the 50S subunit. One of the proteins that surrounds the polypeptide exit tunnel on the outside of the subunit. The chain is Large ribosomal subunit protein uL24 from Streptomyces coelicolor (strain ATCC BAA-471 / A3(2) / M145).